We begin with the raw amino-acid sequence, 1005 residues long: Probable histidine kinase 4 (1005 aa).

Over 1–37 (MGVGGGGGGGGGEAAAAVAVEGDEAGKGRRWWRVKVK) the chain is Cytoplasmic. A helical transmembrane segment spans residues 38–58 (LSTVAVVAWVLASAALWAGLH). Residues 59–333 (WRFRRAALHK…YRNKLHVSWS (275 aa)) are Extracellular-facing. The region spanning 110–321 (HPPALDQDTF…GDPLRKHQMV (212 aa)) is the CHASE domain. Residues 334-354 (AITTPSGVFVICMLVGYIIYA) traverse the membrane as a helical segment. Residues 355 to 1005 (AWSRYDNVKE…QKFLGPCVSS (651 aa)) are Cytoplasmic-facing. Residues 389–675 (TVSHEIRTPM…TFTFTAVLRR (287 aa)) enclose the Histidine kinase domain. Histidine 392 is subject to Phosphohistidine; by autocatalysis. 2 Response regulatory domains span residues 700-829 (SALL…FQAL) and 862-999 (NILV…QKFL). Aspartate 912 is modified (4-aspartylphosphate).

Activation probably requires a transfer of a phosphate group between a His in the transmitter domain and an Asp of the receiver domain. Highly expressed in young leaves and spikelets, and at lower levels in roots, mature leaves and stems.

Its subcellular location is the cell membrane. It carries out the reaction ATP + protein L-histidine = ADP + protein N-phospho-L-histidine.. In terms of biological role, cytokinin receptor related to bacterial two-component regulators. Functions as a histidine kinase and transmits the stress signal to a downstream MAPK cascade. The sequence is that of Probable histidine kinase 4 from Oryza sativa subsp. japonica (Rice).